A 102-amino-acid polypeptide reads, in one-letter code: uncharacterized protein (102 aa).

Residues 27–47 (TISLVSAGLLEEIFLLFGLTF) traverse the membrane as a helical segment.

It is found in the membrane. This is an uncharacterized protein from Saccharomyces cerevisiae (strain ATCC 204508 / S288c) (Baker's yeast).